Consider the following 382-residue polypeptide: Lipid-A-disaccharide synthase (382 aa).

It belongs to the LpxB family.

It carries out the reaction 2-N,3-O-bis[(3R)-3-hydroxytetradecanoyl]-alpha-D-glucosaminyl 1-phosphate + UDP-2-N,3-O-bis[(3R)-3-hydroxytetradecanoyl]-alpha-D-glucosamine = lipid A disaccharide (E. coli) + UDP + H(+). It catalyses the reaction a lipid X + a UDP-2-N,3-O-bis[(3R)-3-hydroxyacyl]-alpha-D-glucosamine = a lipid A disaccharide + UDP + H(+). It participates in glycolipid biosynthesis; lipid IV(A) biosynthesis; lipid IV(A) from (3R)-3-hydroxytetradecanoyl-[acyl-carrier-protein] and UDP-N-acetyl-alpha-D-glucosamine: step 5/6. In terms of biological role, condensation of UDP-2,3-diacylglucosamine and 2,3-diacylglucosamine-1-phosphate to form lipid A disaccharide, a precursor of lipid A, a phosphorylated glycolipid that anchors the lipopolysaccharide to the outer membrane of the cell. The polypeptide is Lipid-A-disaccharide synthase (Sodalis glossinidius (strain morsitans)).